A 417-amino-acid chain; its full sequence is NADH-quinone oxidoreductase subunit D (417 aa).

This sequence belongs to the complex I 49 kDa subunit family. As to quaternary structure, NDH-1 is composed of 14 different subunits. Subunits NuoB, C, D, E, F, and G constitute the peripheral sector of the complex.

It is found in the cell inner membrane. It carries out the reaction a quinone + NADH + 5 H(+)(in) = a quinol + NAD(+) + 4 H(+)(out). NDH-1 shuttles electrons from NADH, via FMN and iron-sulfur (Fe-S) centers, to quinones in the respiratory chain. The immediate electron acceptor for the enzyme in this species is believed to be ubiquinone. Couples the redox reaction to proton translocation (for every two electrons transferred, four hydrogen ions are translocated across the cytoplasmic membrane), and thus conserves the redox energy in a proton gradient. This chain is NADH-quinone oxidoreductase subunit D, found in Azoarcus sp. (strain BH72).